We begin with the raw amino-acid sequence, 208 residues long: Ion-translocating oxidoreductase complex subunit G (208 aa).

A helical transmembrane segment spans residues glycine 9 to leucine 29. At threonine 174 the chain carries FMN phosphoryl threonine.

Belongs to the RnfG family. As to quaternary structure, the complex is composed of six subunits: RnfA, RnfB, RnfC, RnfD, RnfE and RnfG. FMN serves as cofactor.

The protein resides in the cell inner membrane. Part of a membrane-bound complex that couples electron transfer with translocation of ions across the membrane. This Cronobacter sakazakii (strain ATCC BAA-894) (Enterobacter sakazakii) protein is Ion-translocating oxidoreductase complex subunit G.